Here is a 402-residue protein sequence, read N- to C-terminus: Nodal homolog 4-A (402 aa).

Residues methionine 1–serine 18 form the signal peptide. The propeptide occupies leucine 19–arginine 278. 3 N-linked (GlcNAc...) asparagine glycosylation sites follow: asparagine 37, asparagine 238, and asparagine 340. 3 cysteine pairs are disulfide-bonded: cysteine 302–cysteine 368, cysteine 331–cysteine 399, and cysteine 335–cysteine 401.

The protein belongs to the TGF-beta family. Homodimer; disulfide-linked. During blastula stages, expressed in the endoderm at a higher level dorsally than ventrally. Expressed in the deep cells of the Spemann organizer at the gastrula stage. Expressed in the notochord (a derivative of the organizer) and neural tube during the neural stages.

It localises to the secreted. Functionally, cooperation and regulatory loops of multiple nodals are essential for mesendoderm patterning in early embryos. Plays a role in mesoderm formation and may be required for neural development. The sequence is that of Nodal homolog 4-A (nodal4-a) from Xenopus laevis (African clawed frog).